The chain runs to 200 residues: MFNIPAVAVSYLIGSLSFAVIVSKYYGMDDPRTYGSGNPGATNVLRSGKKKAAALTLLGDAAKGLVAVLLARVLQEPLGLSDSAIAAVALAALVGHMWPVFFGFKGGKGVATALGVLLALSPATALVCALIWLVMAFGFKVSSLAALVATTAAPLAALFFMPHTSWIFATLAIAILVLLRHKSNILNLIKGKESKIGEKR.

5 helical membrane passes run Phe-2 to Val-22, Lys-51 to Ala-71, Ala-84 to Phe-104, Leu-114 to Val-134, and Leu-158 to Leu-178.

This sequence belongs to the PlsY family. In terms of assembly, probably interacts with PlsX.

It is found in the cell inner membrane. It catalyses the reaction an acyl phosphate + sn-glycerol 3-phosphate = a 1-acyl-sn-glycero-3-phosphate + phosphate. It functions in the pathway lipid metabolism; phospholipid metabolism. Functionally, catalyzes the transfer of an acyl group from acyl-phosphate (acyl-PO(4)) to glycerol-3-phosphate (G3P) to form lysophosphatidic acid (LPA). This enzyme utilizes acyl-phosphate as fatty acyl donor, but not acyl-CoA or acyl-ACP. This is Glycerol-3-phosphate acyltransferase from Neisseria gonorrhoeae (strain ATCC 700825 / FA 1090).